The following is a 151-amino-acid chain: Transcriptional regulator MraZ (151 aa).

SpoVT-AbrB domains are found at residues 5–52 and 81–124; these read ANAI…PLDE and AVDL…DEDA.

It belongs to the MraZ family. Forms oligomers.

The protein localises to the cytoplasm. The protein resides in the nucleoid. The protein is Transcriptional regulator MraZ of Pseudomonas fluorescens (strain SBW25).